The chain runs to 596 residues: Proteasome-associated ATPase (596 aa).

The stretch at serine 12–proline 94 forms a coiled coil. Glycine 280–leucine 285 lines the ATP pocket. Positions tyrosine 595 to leucine 596 are docks into pockets in the proteasome alpha-ring.

Belongs to the AAA ATPase family. As to quaternary structure, homohexamer. Assembles into a hexameric ring structure that caps the 20S proteasome core. Strongly interacts with the prokaryotic ubiquitin-like protein Pup through a hydrophobic interface; the interacting region of ARC lies in its N-terminal coiled-coil domain. There is one Pup binding site per ARC hexamer ring. Upon ATP-binding, the C-terminus of ARC interacts with the alpha-rings of the proteasome core, possibly by binding to the intersubunit pockets.

It functions in the pathway protein degradation; proteasomal Pup-dependent pathway. Its function is as follows. ATPase which is responsible for recognizing, binding, unfolding and translocation of pupylated proteins into the bacterial 20S proteasome core particle. May be essential for opening the gate of the 20S proteasome via an interaction with its C-terminus, thereby allowing substrate entry and access to the site of proteolysis. Thus, the C-termini of the proteasomal ATPase may function like a 'key in a lock' to induce gate opening and therefore regulate proteolysis. The chain is Proteasome-associated ATPase from Stackebrandtia nassauensis (strain DSM 44728 / CIP 108903 / NRRL B-16338 / NBRC 102104 / LLR-40K-21).